Consider the following 232-residue polypeptide: DNA repair and recombination protein RadB (232 aa).

This sequence belongs to the eukaryotic RecA-like protein family. RadB subfamily.

Involved in DNA repair and in homologous recombination. May regulate the cleavage reactions of the branch-structured DNA. Has a very weak ATPase activity that is not stimulated by DNA. Binds DNA but does not promote DNA strands exchange. This chain is DNA repair and recombination protein RadB, found in Methanosphaera stadtmanae (strain ATCC 43021 / DSM 3091 / JCM 11832 / MCB-3).